A 181-amino-acid polypeptide reads, in one-letter code: Putative manganese efflux pump MntP (181 aa).

Transmembrane regions (helical) follow at residues 5–25, 36–56, 66–86, 102–122, 130–150, and 158–178; these read LIAL…IALG, MFKV…MGMV, GLFA…VMIV, IGLF…GLSL, ALAV…GLFI, and VGPY…VKLL.

The protein belongs to the MntP (TC 9.B.29) family.

It localises to the cell membrane. In terms of biological role, probably functions as a manganese efflux pump. This chain is Putative manganese efflux pump MntP, found in Halalkalibacterium halodurans (strain ATCC BAA-125 / DSM 18197 / FERM 7344 / JCM 9153 / C-125) (Bacillus halodurans).